The sequence spans 228 residues: Endonuclease V (228 aa).

D43 and D109 together coordinate Mg(2+).

Belongs to the endonuclease V family. It depends on Mg(2+) as a cofactor.

The protein resides in the cytoplasm. It catalyses the reaction Endonucleolytic cleavage at apurinic or apyrimidinic sites to products with a 5'-phosphate.. Functionally, DNA repair enzyme involved in the repair of deaminated bases. Selectively cleaves double-stranded DNA at the second phosphodiester bond 3' to a deoxyinosine leaving behind the intact lesion on the nicked DNA. This chain is Endonuclease V, found in Dictyoglomus turgidum (strain DSM 6724 / Z-1310).